The chain runs to 100 residues: Co-chaperonin GroES (100 aa).

It belongs to the GroES chaperonin family. In terms of assembly, heptamer of 7 subunits arranged in a ring. Interacts with the chaperonin GroEL.

Its subcellular location is the cytoplasm. Its function is as follows. Together with the chaperonin GroEL, plays an essential role in assisting protein folding. The GroEL-GroES system forms a nano-cage that allows encapsulation of the non-native substrate proteins and provides a physical environment optimized to promote and accelerate protein folding. GroES binds to the apical surface of the GroEL ring, thereby capping the opening of the GroEL channel. The sequence is that of Co-chaperonin GroES from Rhodothermus marinus (Rhodothermus obamensis).